The sequence spans 143 residues: UPF0251 protein CA_C3166 (143 aa).

Belongs to the UPF0251 family.

This chain is UPF0251 protein CA_C3166, found in Clostridium acetobutylicum (strain ATCC 824 / DSM 792 / JCM 1419 / IAM 19013 / LMG 5710 / NBRC 13948 / NRRL B-527 / VKM B-1787 / 2291 / W).